A 99-amino-acid polypeptide reads, in one-letter code: Small ribosomal subunit protein bS16 (99 aa).

The tract at residues 80 to 99 (PPRQQNEAKRETAETAQPEA) is disordered.

The protein belongs to the bacterial ribosomal protein bS16 family.

This is Small ribosomal subunit protein bS16 from Thermomicrobium roseum (strain ATCC 27502 / DSM 5159 / P-2).